Here is a 162-residue protein sequence, read N- to C-terminus: Allantoicase (162 aa).

Belongs to the allantoicase family. As to quaternary structure, homohexamer. Expressed in zygote.

It catalyses the reaction allantoate + H2O = (S)-ureidoglycolate + urea. It participates in nitrogen metabolism; (S)-allantoin degradation; (S)-ureidoglycolate from allantoate (aminidohydrolase route): step 1/1. Its function is as follows. Catalyzes the degradation of allantoate to (-)-ureidoglycolate and (+)-ureidoglycolate to glyoxylate. This Chlamydomonas reinhardtii (Chlamydomonas smithii) protein is Allantoicase.